We begin with the raw amino-acid sequence, 132 residues long: Large ribosomal subunit protein bL21 (132 aa).

Positions 111 to 132 (AAEKPARKPRAKKTNEVTTDGA) are disordered.

The protein belongs to the bacterial ribosomal protein bL21 family. Part of the 50S ribosomal subunit. Contacts protein L20.

In terms of biological role, this protein binds to 23S rRNA in the presence of protein L20. This is Large ribosomal subunit protein bL21 from Dehalococcoides mccartyi (strain CBDB1).